We begin with the raw amino-acid sequence, 234 residues long: 1-(5-phosphoribosyl)-5-[(5-phosphoribosylamino)methylideneamino] imidazole-4-carboxamide isomerase (234 aa).

Aspartate 9 (proton acceptor) is an active-site residue. Residue aspartate 131 is the Proton donor of the active site.

The protein belongs to the HisA/HisF family.

Its subcellular location is the cytoplasm. It catalyses the reaction 1-(5-phospho-beta-D-ribosyl)-5-[(5-phospho-beta-D-ribosylamino)methylideneamino]imidazole-4-carboxamide = 5-[(5-phospho-1-deoxy-D-ribulos-1-ylimino)methylamino]-1-(5-phospho-beta-D-ribosyl)imidazole-4-carboxamide. The protein operates within amino-acid biosynthesis; L-histidine biosynthesis; L-histidine from 5-phospho-alpha-D-ribose 1-diphosphate: step 4/9. This chain is 1-(5-phosphoribosyl)-5-[(5-phosphoribosylamino)methylideneamino] imidazole-4-carboxamide isomerase, found in Staphylococcus aureus (strain JH1).